Here is a 379-residue protein sequence, read N- to C-terminus: Cytochrome b (379 aa).

Transmembrane regions (helical) follow at residues 33–53, 77–98, 113–133, and 178–198; these read FGSLLGMCLMIQILTGLFLAM, WLIRYLHANGASMFFICLFIHV, WNIGIILFLMTMATAFVGYVL, and FFAFHFILPFIIAAFALVHLL. Heme b contacts are provided by histidine 83 and histidine 97. The heme b site is built by histidine 182 and histidine 196. A ubiquinone is bound at residue histidine 201. The next 4 helical transmembrane spans lie at 226–246, 288–308, 320–340, and 347–367; these read TKDLLGIFLLLLVLMILALFF, LGGVLALVLSILILAAFPLLN, VTQVIYWIFIANLLVLTWIGG, and FTMIGQIASITYFAIITILMP.

This sequence belongs to the cytochrome b family. The cytochrome bc1 complex contains 11 subunits: 3 respiratory subunits (MT-CYB, CYC1 and UQCRFS1), 2 core proteins (UQCRC1 and UQCRC2) and 6 low-molecular weight proteins (UQCRH/QCR6, UQCRB/QCR7, UQCRQ/QCR8, UQCR10/QCR9, UQCR11/QCR10 and a cleavage product of UQCRFS1). This cytochrome bc1 complex then forms a dimer. Heme b serves as cofactor.

The protein resides in the mitochondrion inner membrane. Its function is as follows. Component of the ubiquinol-cytochrome c reductase complex (complex III or cytochrome b-c1 complex) that is part of the mitochondrial respiratory chain. The b-c1 complex mediates electron transfer from ubiquinol to cytochrome c. Contributes to the generation of a proton gradient across the mitochondrial membrane that is then used for ATP synthesis. The sequence is that of Cytochrome b (MT-CYB) from Akodon fumeus (Smoky grass mouse).